The primary structure comprises 312 residues: Glyoxylate/hydroxypyruvate reductase A (312 aa).

Residue R227 is part of the active site. Residue H275 is the Proton donor of the active site.

The protein belongs to the D-isomer specific 2-hydroxyacid dehydrogenase family. GhrA subfamily.

The protein localises to the cytoplasm. It carries out the reaction glycolate + NADP(+) = glyoxylate + NADPH + H(+). The enzyme catalyses (R)-glycerate + NAD(+) = 3-hydroxypyruvate + NADH + H(+). It catalyses the reaction (R)-glycerate + NADP(+) = 3-hydroxypyruvate + NADPH + H(+). Functionally, catalyzes the NADPH-dependent reduction of glyoxylate and hydroxypyruvate into glycolate and glycerate, respectively. Inactive towards 2-oxo-D-gluconate, 2-oxoglutarate, oxaloacetate and pyruvate. Only D- and L-glycerate are involved in the oxidative activity with NADP. Activity with NAD is very low. In Escherichia coli (strain K12), this protein is Glyoxylate/hydroxypyruvate reductase A (ghrA).